The chain runs to 396 residues: UPF0046 protein T07D4.2 (396 aa).

Residues 73-94 (SRRGSIASGIPMDKKTRRKLSN) form a disordered region.

Belongs to the UPF0046 family.

The polypeptide is UPF0046 protein T07D4.2 (Caenorhabditis elegans).